The chain runs to 295 residues: Defective in cullin neddylation protein AAR3 (295 aa).

One can recognise a DCUN1 domain in the interval 1-180; it reads MDSSPVSARF…LIDDFVEHMY (180 aa). The Nuclear localization signal motif lies at 214-221; the sequence is YRRPHTGL. The tract at residues 214–251 is disordered; it reads YRRPHTGLRNIPGLKRKTSKKNDEEEEDEDEEVLETQN. The segment covering 237 to 247 has biased composition (acidic residues); sequence EEEEDEDEEVL.

It is found in the nucleus. May contribute to the neddylation of all cullins by transferring NEDD8 from N-terminally acetylated NEDD8-conjugating E2s enzyme to different cullin C-terminal domain-RBX complexes; neddylation of cullins play an essential role in the regulation of SCF-type complexes activity. Regulates responses to the synthetic auxin 2,4-dichlorophenoxyacetic acid (2,4-D) in roots, probably by modulating the SCF(TIR1) ubiquitin E3 ligase complex-mediated proteolysis. The chain is Defective in cullin neddylation protein AAR3 from Arabidopsis thaliana (Mouse-ear cress).